The following is a 314-amino-acid chain: tRNA pseudouridine synthase B (314 aa).

His43 is a substrate binding site. Residue Asp48 is the Nucleophile of the active site. Positions 76, 179, and 200 each coordinate substrate.

The protein belongs to the pseudouridine synthase TruB family. Type 1 subfamily.

It carries out the reaction uridine(55) in tRNA = pseudouridine(55) in tRNA. Functionally, responsible for synthesis of pseudouridine from uracil-55 in the psi GC loop of transfer RNAs. This chain is tRNA pseudouridine synthase B, found in Escherichia coli O157:H7.